The primary structure comprises 156 residues: Small ribosomal subunit protein uS7 (156 aa).

It belongs to the universal ribosomal protein uS7 family. Part of the 30S ribosomal subunit. Contacts proteins S9 and S11.

One of the primary rRNA binding proteins, it binds directly to 16S rRNA where it nucleates assembly of the head domain of the 30S subunit. Is located at the subunit interface close to the decoding center, probably blocks exit of the E-site tRNA. The polypeptide is Small ribosomal subunit protein uS7 (Hahella chejuensis (strain KCTC 2396)).